The following is a 645-amino-acid chain: 1,4-alpha-glucan branching enzyme GlgB (645 aa).

D309 acts as the Nucleophile in catalysis. Residue E352 is the Proton donor of the active site. Residues 619–645 (VKTRKGSKKQDGSKTKVRSNVTSRGKR) are disordered. Residues 636–645 (RSNVTSRGKR) are compositionally biased toward polar residues.

This sequence belongs to the glycosyl hydrolase 13 family. GlgB subfamily. Monomer.

The catalysed reaction is Transfers a segment of a (1-&gt;4)-alpha-D-glucan chain to a primary hydroxy group in a similar glucan chain.. It participates in glycan biosynthesis; glycogen biosynthesis. In terms of biological role, catalyzes the formation of the alpha-1,6-glucosidic linkages in glycogen by scission of a 1,4-alpha-linked oligosaccharide from growing alpha-1,4-glucan chains and the subsequent attachment of the oligosaccharide to the alpha-1,6 position. This Bacillus cereus (strain ATCC 10987 / NRS 248) protein is 1,4-alpha-glucan branching enzyme GlgB.